The following is a 758-amino-acid chain: Vitamin K-dependent gamma-carboxylase (758 aa).

The interval 1–34 (MAVSARPARAPRGSDKVKKDKAAQTSGPRQGSRM) is disordered. At Ala-2 the chain carries N-acetylalanine. At 2 to 60 (AVSARPARAPRGSDKVKKDKAAQTSGPRQGSRMGKLLGFEWTDVSSWERLVTLLNRPTD) the chain is on the cytoplasmic side. Basic and acidic residues predominate over residues 12–22 (RGSDKVKKDKA). Residues 61–81 (PAGLAVFRFLFGLMMVLDIPQ) traverse the membrane as a helical segment. At 82 to 113 (ERGLSSLDRRYLDGLEVCRFPLLDALQPLPLD) the chain is on the lumenal side. The cysteines at positions 99 and 450 are disulfide-linked. A helical transmembrane segment spans residues 114 to 134 (WMYLIYTIMFLGALGMMLGLC). The Cytoplasmic portion of the chain corresponds to 135–136 (YR). The helical transmembrane segment at 137–157 (ISCVLFLLPYWYVFLLDKTSW) threads the bilayer. Residues 158 to 292 (NNHSYLYGLL…VSYFHCMNSQ (135 aa)) are Lumenal-facing. Residues 293-313 (LFSIGMFPYVMLASSPLFCSP) form a helical membrane-spanning segment. Residues 314–363 (EWPRKLVAHCPKKLQELLPLRTAPQPSTSCMYKRSRARGSQKPGLRHKLS) are Cytoplasmic-facing. The chain crosses the membrane as a helical span at residues 364 to 384 (TAFTLLYLLEQLFLPYSHFLT). The Lumenal segment spans residues 385–758 (QGYNNWTNGL…PDSHPVHSEF (374 aa)). Positions 727 to 758 (PFEPAGEPSPVNTDSSNPNPPEPDSHPVHSEF) are disordered. Residues 749-758 (PDSHPVHSEF) are compositionally biased toward basic and acidic residues.

As to quaternary structure, monomer. May interact with CALU. The N-terminus is blocked.

The protein resides in the endoplasmic reticulum membrane. It carries out the reaction 4-carboxy-L-glutamyl-[protein] + 2,3-epoxyphylloquinone + H2O + H(+) = phylloquinol + L-glutamyl-[protein] + CO2 + O2. Functionally, mediates the vitamin K-dependent carboxylation of glutamate residues to calcium-binding gamma-carboxyglutamate (Gla) residues with the concomitant conversion of the reduced hydroquinone form of vitamin K to vitamin K epoxide. Catalyzes gamma-carboxylation of various proteins, such as blood coagulation factors (F2, F7, F9 and F10), osteocalcin (BGLAP) or matrix Gla protein (MGP). The chain is Vitamin K-dependent gamma-carboxylase (GGCX) from Bos taurus (Bovine).